Here is a 36-residue protein sequence, read N- to C-terminus: Putative DNA-binding protein inhibitor ID-2B (36 aa).

The chain is Putative DNA-binding protein inhibitor ID-2B (ID2B) from Homo sapiens (Human).